The chain runs to 59 residues: Cecropin-C (59 aa).

An N-terminal signal peptide occupies residues 1–23 (MNFKLIFLVALVLMAAFLGQTEG). A Valine amide modification is found at Val58.

Belongs to the cecropin family.

Its subcellular location is the secreted. Functionally, cecropins have lytic and antibacterial activity against several Gram-positive and Gram-negative bacteria. The sequence is that of Cecropin-C (CecC) from Anopheles gambiae (African malaria mosquito).